The sequence spans 488 residues: Acetyl-CoA decarbonylase/synthase complex subunit gamma (488 aa).

In terms of domain architecture, 4Fe-4S spans 1–61 (MPKKISAMDI…FEKNKKKIIE (61 aa)). [4Fe-4S] cluster-binding residues include Cys-19, Cys-22, Cys-27, and Cys-44.

In terms of assembly, heterodimer of delta and gamma chains. The ACDS complex is made up of alpha, epsilon, beta, gamma and delta chains with a probable stoichiometry of (alpha(2)epsilon(2))(4)-beta(8)-(gamma(1)delta(1))(8). It depends on corrinoid as a cofactor. The cofactor is [4Fe-4S] cluster.

It carries out the reaction 5,6,7,8-tetrahydrosarcinapterin + methyl-Co(III)-[corrinoid Fe-S protein] = 5-methyltetrahydrosarcinapterin + Co(I)-[corrinoid Fe-S protein] + H(+). Part of a complex that catalyzes the reversible cleavage of acetyl-CoA, allowing autotrophic growth from CO(2). This chain is Acetyl-CoA decarbonylase/synthase complex subunit gamma, found in Methanocaldococcus jannaschii (strain ATCC 43067 / DSM 2661 / JAL-1 / JCM 10045 / NBRC 100440) (Methanococcus jannaschii).